A 346-amino-acid polypeptide reads, in one-letter code: Tetraacyldisaccharide 4'-kinase (346 aa).

62-69 contributes to the ATP binding site; the sequence is TAGGTGKT.

It belongs to the LpxK family.

It carries out the reaction a lipid A disaccharide + ATP = a lipid IVA + ADP + H(+). It participates in glycolipid biosynthesis; lipid IV(A) biosynthesis; lipid IV(A) from (3R)-3-hydroxytetradecanoyl-[acyl-carrier-protein] and UDP-N-acetyl-alpha-D-glucosamine: step 6/6. Its function is as follows. Transfers the gamma-phosphate of ATP to the 4'-position of a tetraacyldisaccharide 1-phosphate intermediate (termed DS-1-P) to form tetraacyldisaccharide 1,4'-bis-phosphate (lipid IVA). The chain is Tetraacyldisaccharide 4'-kinase from Xanthomonas oryzae pv. oryzae (strain MAFF 311018).